We begin with the raw amino-acid sequence, 215 residues long: Ribosomal RNA small subunit methyltransferase G (215 aa).

Residues glycine 78, leucine 83, 128-129 (AE), and arginine 146 each bind S-adenosyl-L-methionine.

It belongs to the methyltransferase superfamily. RNA methyltransferase RsmG family.

It is found in the cytoplasm. It carries out the reaction guanosine(527) in 16S rRNA + S-adenosyl-L-methionine = N(7)-methylguanosine(527) in 16S rRNA + S-adenosyl-L-homocysteine. In terms of biological role, specifically methylates the N7 position of guanine in position 527 of 16S rRNA. The chain is Ribosomal RNA small subunit methyltransferase G from Anaeromyxobacter dehalogenans (strain 2CP-C).